A 1294-amino-acid chain; its full sequence is Ethylene-insensitive protein 2 (1294 aa).

The Cytoplasmic segment spans residues Met1–Leu12. The helical transmembrane segment at Gly13–Ile33 threads the bilayer. Topologically, residues Asp34–Tyr50 are extracellular. A helical transmembrane segment spans residues Asp51 to Ala71. The Cytoplasmic segment spans residues Arg72–Ala105. The helical transmembrane segment at Ile106–Val126 threads the bilayer. Position 127 (Glu127) is a topological domain, extracellular. A helical transmembrane segment spans residues Leu128–Phe148. The Cytoplasmic portion of the chain corresponds to Leu149 to Asn155. Residues Thr156–Ser176 traverse the membrane as a helical segment. Residues Gln177 to Glu194 lie on the Extracellular side of the membrane. A helical transmembrane segment spans residues Ser195 to His215. Residues Ser216–His237 lie on the Cytoplasmic side of the membrane. Residues Leu238–Ala258 traverse the membrane as a helical segment. At Ala259–Pro287 the chain is on the extracellular side. Residues Leu288–Trp308 traverse the membrane as a helical segment. Residues Ala309–Arg334 are Cytoplasmic-facing. The next 2 helical transmembrane spans lie at Ile335 to Gln355 and Leu356 to Phe376. The Cytoplasmic portion of the chain corresponds to Arg377 to Leu397. The helical transmembrane segment at Ala398 to Phe418 threads the bilayer. Residues Gly419–Thr440 are Extracellular-facing. A helical membrane pass occupies residues Thr441–Leu461. Residues Lys462–Gly1294 are Cytoplasmic-facing. Disordered regions lie at residues Thr534–Lys561 and Glu623–Arg662. The segment covering Gln536–Val550 has biased composition (basic and acidic residues). A phosphoserine mark is found at Ser645, Ser659, and Ser757. Thr819 bears the Phosphothreonine mark. Ser924 carries the post-translational modification Phosphoserine. Residues Leu1262–Leu1269 carry the Nuclear localization signal motif. The interval Leu1269–Gly1294 is disordered. Position 1283 is a phosphoserine (Ser1283).

This sequence belongs to the NRAMP (TC 2.A.55) family. As to quaternary structure, interacts (via NLS) with ETR1. Interacts (via C-terminus) with EER5 and the COP9 signalosome subunits CSN3, CSN6A and CSN6B. Interacts with ETP1 and ETP2. Interacts with CTR1. Interacts with all members of the ethylene receptor family, including ETR1, ETR2, ERS1, ERS2 and EIN4. Binds to MRF3/ECIP1. In terms of assembly, interacts with several P-body components, such as XRN4/EIN5, PAB2, PAB4 and PAB8. Binds to ENAP1 in the presence of ethylene; this reaction facilitates its association with histone. In terms of processing, phosphorylated by CTR1 on at least 4 sites. Phosphorylation of Ser-645 and Ser-924 is involved in repressing EIN2 signaling. Loss of phosphorylation results in nuclear localization of the C-terminus of EIN2. In terms of tissue distribution, localized to the guard cells after methyl jasmonate treatment.

The protein resides in the endoplasmic reticulum membrane. Its subcellular location is the nucleus. The protein localises to the cytoplasm. Functionally, central factor in signaling pathways regulated by ethylene (ET) and involved in various processes including development, plant defense, senescence, nucleotide sugar flux, and tropisms. Necessary for ethylene-mediated gene regulation, and for the induction of some genes by ozone. Acts downstream of ET receptors, and upstream of ethylene regulated transcription factors. Required for cytokinin-mediated processes. Seems to be implicated in cross-talk between ET, jasmonate and other pathways. Probably not involved in iron uptake. Has a short half-life and undergoes rapid proteasome-mediated turnover in the absence of ethylene. Required for ethylene-induced EIN3 stabilization via proteasomal degradation of EBF1/EBF2 proteins. Regulates the leaf senescence induced by methyl jasmonate, ethylene and abscisic acid. Required during salt stress to confer resistance. Its function is as follows. Trafficking signal inducing ethylene response. The nuclear localization is both necessary and sufficient to activate EIN3-mediated transcription and ethylene responses. Involved in ethylene (ET)-mediated signaling pathways by triggering histone acetylation of H3K14 and H3K23 in an ENAP1-dependent manner, thus influencing the expression of ethylene-responsive genes. Necessary and sufficient for 3'-UTR-mediated translational repression of EBF1 and EBF2 mRNAs. Ethylene induces EIN2-CEND to associate with 3' UTRs in cytoplasmic foci and target EBF1/2 mRNAs to cytoplasmic processing-body (P-body). MPK6 regulates the cleavage and nuclear translocation of EIN2-CEND under methyl jasmonate treatment. Required for EIN3 accumulation. The sequence is that of Ethylene-insensitive protein 2 from Arabidopsis thaliana (Mouse-ear cress).